The primary structure comprises 782 residues: Tripartite terminase subunit 1 (782 aa).

The C3H1-type zinc finger occupies 190–218; that stretch reads CLQCYEELAAVPNQGRSILKRLRGLLCDH. Residue 666–673 participates in ATP binding; the sequence is YNEAFGKE. Positions 727 to 740 are enriched in pro residues; the sequence is APPPPAAPSPPPAE. The interval 727–754 is disordered; it reads APPPPAAPSPPPAEPATTAGASRKRPAV.

This sequence belongs to the herpesviridae TRM1 protein family. In terms of assembly, associates with TRM2 and TRM3 to form the tripartite terminase complex. Interacts with portal protein.

Its subcellular location is the host nucleus. Functionally, component of the molecular motor that translocates viral genomic DNA in empty capsid during DNA packaging. Forms a tripartite terminase complex together with TRM2 and TRM3 in the host cytoplasm. Once the complex reaches the host nucleus, it interacts with the capsid portal vertex. This portal forms a ring in which genomic DNA is translocated into the capsid. TRM1 carries an endonuclease activity that plays an important role for the cleavage of concatemeric viral DNA into unit length genomes. In Tupaiid herpesvirus (strain 2) (TuHV-2), this protein is Tripartite terminase subunit 1.